Consider the following 657-residue polypeptide: Protein mono-ADP-ribosyltransferase TIPARP (657 aa).

A compositionally biased stretch (acidic residues) spans 1–10; the sequence is MEVETTEPEP. The tract at residues 1 to 22 is disordered; the sequence is MEVETTEPEPDCVVQPPSPSDD. C39 bears the ADP-ribosylcysteine mark. The Nuclear localization signal motif lies at 41-48; sequence KKKQEQKR. The disordered stretch occupies residues 121–154; it reads QLPEAHPSTDAPEQGVPIQDHSFPPETISGTVAD. The C3H1-type zinc-finger motif lies at 238–265; it reads ENGIEICMDFLQGTCIYGRDCLKHHTVL. Residues 333 to 411 form the WWE domain; that stretch reads STPPCSNSNS…RRPLFRSCFI (79 aa). Residues 449–657 enclose the PARP catalytic domain; sequence YPETWVYMHP…YEEVSNTVSI (209 aa).

This sequence belongs to the ARTD/PARP family. As to quaternary structure, interacts with AHR. Auto-mono-ADP-ribosylated. In terms of tissue distribution, ubiquitously expressed.

It is found in the nucleus. The enzyme catalyses L-aspartyl-[protein] + NAD(+) = 4-O-(ADP-D-ribosyl)-L-aspartyl-[protein] + nicotinamide. It carries out the reaction L-glutamyl-[protein] + NAD(+) = 5-O-(ADP-D-ribosyl)-L-glutamyl-[protein] + nicotinamide. It catalyses the reaction L-cysteinyl-[protein] + NAD(+) = S-(ADP-D-ribosyl)-L-cysteinyl-[protein] + nicotinamide + H(+). Its function is as follows. ADP-ribosyltransferase that mediates mono-ADP-ribosylation of glutamate, aspartate and cysteine residues on target proteins. Acts as a negative regulator of AHR by mediating mono-ADP-ribosylation of AHR, leading to inhibit transcription activator activity of AHR. This is Protein mono-ADP-ribosyltransferase TIPARP from Mus musculus (Mouse).